The primary structure comprises 64 residues: Large ribosomal subunit protein bL35 (64 aa).

Residues 1 to 15 show a composition bias toward basic residues; sequence MPKQKSHSGASKRFR. Residues 1 to 22 are disordered; that stretch reads MPKQKSHSGASKRFRVTGSGKV.

It belongs to the bacterial ribosomal protein bL35 family.

The protein is Large ribosomal subunit protein bL35 of Frankia casuarinae (strain DSM 45818 / CECT 9043 / HFP020203 / CcI3).